A 257-amino-acid polypeptide reads, in one-letter code: Hydroxyethylthiazole kinase (257 aa).

A substrate-binding site is contributed by methionine 49. Positions 124 and 170 each coordinate ATP. Glycine 197 is a substrate binding site.

The protein belongs to the Thz kinase family. Requires Mg(2+) as cofactor.

The catalysed reaction is 5-(2-hydroxyethyl)-4-methylthiazole + ATP = 4-methyl-5-(2-phosphooxyethyl)-thiazole + ADP + H(+). It participates in cofactor biosynthesis; thiamine diphosphate biosynthesis; 4-methyl-5-(2-phosphoethyl)-thiazole from 5-(2-hydroxyethyl)-4-methylthiazole: step 1/1. Its function is as follows. Catalyzes the phosphorylation of the hydroxyl group of 4-methyl-5-beta-hydroxyethylthiazole (THZ). This Klebsiella pneumoniae (strain 342) protein is Hydroxyethylthiazole kinase.